The following is a 248-amino-acid chain: tRNA (guanine-N(1)-)-methyltransferase (248 aa).

S-adenosyl-L-methionine-binding positions include Gly113 and 133–138; that span reads IGDFVL.

It belongs to the RNA methyltransferase TrmD family. As to quaternary structure, homodimer.

The protein resides in the cytoplasm. It carries out the reaction guanosine(37) in tRNA + S-adenosyl-L-methionine = N(1)-methylguanosine(37) in tRNA + S-adenosyl-L-homocysteine + H(+). Its function is as follows. Specifically methylates guanosine-37 in various tRNAs. The polypeptide is tRNA (guanine-N(1)-)-methyltransferase (Dehalococcoides mccartyi (strain CBDB1)).